A 692-amino-acid chain; its full sequence is 5-taurinomethyluridine-[tRNA] synthase subunit MTO1, mitochondrial (692 aa).

A mitochondrion-targeting transit peptide spans 1–25; the sequence is MFYFRGCGRWVAASFTKLQFPLARL. FAD is bound by residues 43 to 48, V155, S218, and Q407; that span reads GGGHAG. K508 carries the post-translational modification N6-methyllysine.

Belongs to the MnmG family. In terms of assembly, homodimer; forms a dimer in the presence of potassium. Interacts with GTPBP3; forms the GTPBP3-MTO1 complex composed of homodimers of GTPBP3 and MTO1. FAD serves as cofactor.

The protein resides in the mitochondrion. It carries out the reaction 5,10-methylenetetrahydrofolate + uridine(34) in tRNA + taurine + GTP + A + H2O = 5-taurinomethyluridine(34) in tRNA + 7,8-dihydrofolate + GDP + AH2 + phosphate + H(+). In terms of biological role, component of the GTPBP3-MTO1 complex that catalyzes the 5-taurinomethyluridine (taum(5)U) modification at the 34th wobble position (U34) of mitochondrial tRNAs (mt-tRNAs), which plays a role in mt-tRNA decoding and mitochondrial translation. Taum(5)U formation on mammalian mt-tRNA requires the presence of both GTPBP3-mediated GTPase activity and MTO1 catalytic activity. This chain is 5-taurinomethyluridine-[tRNA] synthase subunit MTO1, mitochondrial (MTO1), found in Pongo abelii (Sumatran orangutan).